Reading from the N-terminus, the 98-residue chain is NADH-ubiquinone oxidoreductase chain 4L (98 aa).

The next 3 membrane-spanning stretches (helical) occupy residues 1–21, 29–49, and 61–81; these read MSLI…GLLM, ALLC…LTIL, and IILL…LVMI.

Belongs to the complex I subunit 4L family. In terms of assembly, core subunit of respiratory chain NADH dehydrogenase (Complex I) which is composed of 45 different subunits.

It is found in the mitochondrion inner membrane. It carries out the reaction a ubiquinone + NADH + 5 H(+)(in) = a ubiquinol + NAD(+) + 4 H(+)(out). Functionally, core subunit of the mitochondrial membrane respiratory chain NADH dehydrogenase (Complex I) which catalyzes electron transfer from NADH through the respiratory chain, using ubiquinone as an electron acceptor. Part of the enzyme membrane arm which is embedded in the lipid bilayer and involved in proton translocation. The sequence is that of NADH-ubiquinone oxidoreductase chain 4L (MT-ND4L) from Platanista minor (Indus river dolphin).